A 204-amino-acid chain; its full sequence is High frequency lysogenization protein HflD homolog (204 aa).

It belongs to the HflD family.

The protein localises to the cytoplasm. The protein resides in the cell inner membrane. This is High frequency lysogenization protein HflD homolog from Xanthomonas axonopodis pv. citri (strain 306).